The primary structure comprises 216 residues: MOB kinase activator-like 1 homolog B (216 aa).

Residues Cys-79, Cys-84, His-161, and His-166 each contribute to the Zn(2+) site.

The protein belongs to the MOB1/phocein family.

The chain is MOB kinase activator-like 1 homolog B (mobB) from Dictyostelium discoideum (Social amoeba).